A 450-amino-acid polypeptide reads, in one-letter code: Phosphoglucosamine mutase (450 aa).

Serine 107 serves as the catalytic Phosphoserine intermediate. Residues serine 107, aspartate 246, aspartate 248, and aspartate 250 each contribute to the Mg(2+) site. Serine 107 carries the phosphoserine modification.

The protein belongs to the phosphohexose mutase family. It depends on Mg(2+) as a cofactor. Activated by phosphorylation.

The catalysed reaction is alpha-D-glucosamine 1-phosphate = D-glucosamine 6-phosphate. Functionally, catalyzes the conversion of glucosamine-6-phosphate to glucosamine-1-phosphate. The protein is Phosphoglucosamine mutase of Dechloromonas aromatica (strain RCB).